We begin with the raw amino-acid sequence, 73 residues long: Small ribosomal subunit protein bS18 (73 aa).

The protein belongs to the bacterial ribosomal protein bS18 family. As to quaternary structure, part of the 30S ribosomal subunit. Forms a tight heterodimer with protein bS6.

Binds as a heterodimer with protein bS6 to the central domain of the 16S rRNA, where it helps stabilize the platform of the 30S subunit. The chain is Small ribosomal subunit protein bS18 from Prochlorococcus marinus (strain NATL2A).